The sequence spans 469 residues: 6-phosphofructo-2-kinase/fructose-2,6-bisphosphatase 4 (469 aa).

The segment at 1 to 249 (MASPRELTQN…YYLMNIHVTP (249 aa)) is 6-phosphofructo-2-kinase. 46–54 (GLPARGKTY) serves as a coordination point for ATP. 2 residues coordinate beta-D-fructose 6-phosphate: Arg79 and Arg103. Residue Asp129 is part of the active site. 2 residues coordinate beta-D-fructose 6-phosphate: Thr131 and Arg137. Cys159 is a catalytic residue. 168-173 (NIVQVK) serves as a coordination point for ATP. Beta-D-fructose 6-phosphate-binding residues include Lys173, Arg194, and Tyr198. The tract at residues 250–469 (RSIYLCRHGE…EALVTVPAHQ (220 aa)) is fructose-2,6-bisphosphatase. Arg256 serves as a coordination point for beta-D-fructose 2,6-bisphosphate. His257 acts as the Tele-phosphohistidine intermediate in catalysis. 3 residues coordinate beta-D-fructose 2,6-bisphosphate: Asn263, Gly269, and Arg306. Residue Glu326 is the Proton donor/acceptor of the active site. Beta-D-fructose 2,6-bisphosphate contacts are provided by Tyr337, Arg351, Lys355, Tyr366, Gln392, and Arg396. 348 to 351 (FALR) contacts ATP. ATP is bound by residues 392–396 (QAVMR) and Tyr428. Residue Thr444 is modified to Phosphothreonine; by PKC.

In the C-terminal section; belongs to the phosphoglycerate mutase family. As to quaternary structure, homodimer.

It carries out the reaction beta-D-fructose 2,6-bisphosphate + H2O = beta-D-fructose 6-phosphate + phosphate. The catalysed reaction is beta-D-fructose 6-phosphate + ATP = beta-D-fructose 2,6-bisphosphate + ADP + H(+). Its activity is regulated as follows. The most important regulatory mechanism of these opposing activities is by phosphorylation and dephosphorylation of the enzyme. Synthesis and degradation of fructose 2,6-bisphosphate. This is 6-phosphofructo-2-kinase/fructose-2,6-bisphosphatase 4 (PFKFB4) from Macaca fascicularis (Crab-eating macaque).